A 162-amino-acid polypeptide reads, in one-letter code: Selenoprotein F (162 aa).

An N-terminal signal peptide occupies residues 1-28 (MAAEPGGWLGPALGLRLLLATALQMVSA). Residue selenocysteine 93 is a non-standard amino acid, selenocysteine.

This sequence belongs to the selenoprotein M/F family. Forms a tight complex with UGGT1/UGCGL1. Interacts with UGGT2/UGCGL2. Interacts with RDH11.

It is found in the endoplasmic reticulum lumen. Functionally, may be involved in redox reactions associated with the formation of disulfide bonds. May contribute to the quality control of protein folding in the endoplasmic reticulum. May regulate protein folding by enhancing the catalytic activity of UGGT1/UGCGL1 and UGGT2/UGCGL2. The polypeptide is Selenoprotein F (Sus scrofa (Pig)).